The sequence spans 457 residues: Squalene epoxidase erg1 (457 aa).

FAD-binding positions include 15-16, 35-36, arginine 43, arginine 114, valine 130, aspartate 293, and methionine 306; these read IT and ER. The next 3 helical transmembrane spans lie at 347–364, 409–429, and 433–453; these read GYSF…KLFT, FYAV…ALLM, and IIES…YILS.

The protein belongs to the squalene monooxygenase family. The cofactor is FAD.

It is found in the microsome membrane. It localises to the endoplasmic reticulum membrane. The protein localises to the vacuole membrane. The enzyme catalyses squalene + reduced [NADPH--hemoprotein reductase] + O2 = (S)-2,3-epoxysqualene + oxidized [NADPH--hemoprotein reductase] + H2O + H(+). It participates in terpene metabolism; lanosterol biosynthesis; lanosterol from farnesyl diphosphate: step 2/3. Its pathway is steroid metabolism; ergosterol biosynthesis. Its activity is regulated as follows. Activity is blocked by the allylamine class antifungal terbinafine. Functionally, squalene epoxidase; part of the third module of ergosterol biosynthesis pathway that includes by the late steps of the pathway. Erg1 catalyzes the epoxidation of squalene into 2,3-epoxysqualene. The third module or late pathway involves the ergosterol synthesis itself through consecutive reactions that mainly occur in the endoplasmic reticulum (ER) membrane. Firstly, the squalene synthase erg9 catalyzes the condensation of 2 farnesyl pyrophosphate moieties to form squalene, which is the precursor of all steroids. Secondly, squalene is converted into lanosterol by the consecutive action of the squalene epoxidase erg1 and the lanosterol synthase erg7. The lanosterol 14-alpha-demethylase erg11/cyp1 catalyzes C14-demethylation of lanosterol to produce 4,4'-dimethyl cholesta-8,14,24-triene-3-beta-ol. In the next steps, a complex process involving various demethylation, reduction and desaturation reactions catalyzed by the C-14 reductase erg24 and the C-4 demethylation complex erg25-erg26-erg27 leads to the production of zymosterol. Erg28 likely functions in the C-4 demethylation complex reaction by tethering erg26 and Erg27 to the endoplasmic reticulum or to facilitate interaction between these proteins. Then, the sterol 24-C-methyltransferase erg6 catalyzes the methyl transfer from S-adenosyl-methionine to the C-24 of zymosterol to form fecosterol. The C-8 sterol isomerase erg2 catalyzes the reaction which results in unsaturation at C-7 in the B ring of sterols and thus converts fecosterol to episterol. The sterol-C5-desaturases erg31 and erg32 then catalyze the introduction of a C-5 double bond in the B ring to produce 5-dehydroepisterol. The C-22 sterol desaturase erg5 further converts 5-dehydroepisterol into ergosta-5,7,22,24(28)-tetraen-3beta-ol by forming the C-22(23) double bond in the sterol side chain. Finally, ergosta-5,7,22,24(28)-tetraen-3beta-ol is substrate of the C-24(28) sterol reductase erg4 to produce ergosterol. In the genus Schizosaccharomyces, a second route exists between lanosterol and fecosterol, via the methylation of lanosterol to eburicol by erg6, followed by C14-demethylation by erg11/cyp1 and C4-demethylation by the demethylation complex erg25-erg26-erg27. The chain is Squalene epoxidase erg1 from Schizosaccharomyces pombe (strain 972 / ATCC 24843) (Fission yeast).